The chain runs to 288 residues: Polyamine aminopropyltransferase (288 aa).

Residues 9 to 238 (ETLHDQFGQY…GIMTFAWATD (230 aa)) form the PABS domain. Glutamine 33 serves as a coordination point for S-methyl-5'-thioadenosine. Spermidine-binding residues include histidine 64 and aspartate 88. S-methyl-5'-thioadenosine is bound by residues glutamate 108 and 140–141 (DG). Aspartate 158 functions as the Proton acceptor in the catalytic mechanism. 158–161 (DCTD) serves as a coordination point for spermidine. Proline 165 lines the S-methyl-5'-thioadenosine pocket.

This sequence belongs to the spermidine/spermine synthase family. Homodimer or homotetramer.

The protein resides in the cytoplasm. The catalysed reaction is S-adenosyl 3-(methylsulfanyl)propylamine + putrescine = S-methyl-5'-thioadenosine + spermidine + H(+). It participates in amine and polyamine biosynthesis; spermidine biosynthesis; spermidine from putrescine: step 1/1. Functionally, catalyzes the irreversible transfer of a propylamine group from the amino donor S-adenosylmethioninamine (decarboxy-AdoMet) to putrescine (1,4-diaminobutane) to yield spermidine. This chain is Polyamine aminopropyltransferase, found in Shigella boydii serotype 4 (strain Sb227).